We begin with the raw amino-acid sequence, 349 residues long: N-acetyltaurine hydrolase (349 aa).

A divalent metal cation is bound by residues histidine 26, histidine 28, glutamate 169, histidine 201, histidine 230, and aspartate 298.

Belongs to the metallo-dependent hydrolases superfamily. Phosphotriesterase family. The cofactor is a divalent metal cation. In terms of tissue distribution, expressed in the kidney, liver and brainstem.

The protein localises to the cytoplasm. It is found in the cytosol. The catalysed reaction is N-acetyltaurine + H2O = taurine + acetate. It carries out the reaction N-propanoyltaurine + H2O = propanoate + taurine. The enzyme catalyses N-acetyl-L-methionine + H2O = L-methionine + acetate. It catalyses the reaction N-acetyl-L-isoleucine + H2O = L-isoleucine + acetate. The catalysed reaction is N-acetyl-L-leucine + H2O = L-leucine + acetate. It carries out the reaction N-acetyl-L-valine + H2O = L-valine + acetate. In terms of biological role, N-acetyltaurine hydrolase that regulates feeding by catalyzing the hydrolysis of N-acetyltaurine into taurine and acetate. N-acetyltaurine has anorexigenic and anti-obesity effects that are dependent on GFRAL receptor and GDF15. PTER also acts on other N-acetyl amino acids (Met, Ile, Leu, Val) and N-propionyltaurine, but at lower rates. In Mus musculus (Mouse), this protein is N-acetyltaurine hydrolase.